The chain runs to 376 residues: UPF0754 membrane protein BLi01057/BL02871 (376 aa).

The next 2 membrane-spanning stretches (helical) occupy residues 1-21 (MYVFGIFAVMIAVGALIGAVT) and 356-376 (YLGGLLGGIIGAVQAIFVILI).

Belongs to the UPF0754 family.

It localises to the cell membrane. The chain is UPF0754 membrane protein BLi01057/BL02871 from Bacillus licheniformis (strain ATCC 14580 / DSM 13 / JCM 2505 / CCUG 7422 / NBRC 12200 / NCIMB 9375 / NCTC 10341 / NRRL NRS-1264 / Gibson 46).